Reading from the N-terminus, the 98-residue chain is MTTIYLNLILAFTLALSGVLIYRSHLLSTLLCLEGMMLSLFILMALTISHFHMFSLSMAPLILLVFSACEAGVGLALLVKTSNAHGNDHVQSLNLLQC.

3 helical membrane passes run 1–21, 26–46, and 59–79; these read MTTIYLNLILAFTLALSGVLI, LLSTLLCLEGMMLSLFILMAL, and APLILLVFSACEAGVGLALLV.

The protein belongs to the complex I subunit 4L family. In terms of assembly, core subunit of respiratory chain NADH dehydrogenase (Complex I) which is composed of 45 different subunits.

It localises to the mitochondrion inner membrane. The enzyme catalyses a ubiquinone + NADH + 5 H(+)(in) = a ubiquinol + NAD(+) + 4 H(+)(out). Core subunit of the mitochondrial membrane respiratory chain NADH dehydrogenase (Complex I) which catalyzes electron transfer from NADH through the respiratory chain, using ubiquinone as an electron acceptor. Part of the enzyme membrane arm which is embedded in the lipid bilayer and involved in proton translocation. In Rhyncholestes raphanurus (Chilean shrew opossum), this protein is NADH-ubiquinone oxidoreductase chain 4L (MT-ND4L).